The chain runs to 533 residues: Trigger factor (533 aa).

The PPIase FKBP-type domain occupies 164–249 (GDQLIIDFTG…VKQVKVETDT (86 aa)). Residues 436-533 (EAAIEAEAEE…APAKKPAAKK (98 aa)) are disordered. The span at 465-477 (AAAKKAPAKKAPA) shows a compositional bias: basic residues. Residues 481 to 490 (AAKDGDEKPA) are compositionally biased toward basic and acidic residues. Composition is skewed to basic residues over residues 494–506 (APAKKAPAKKAST) and 515–533 (PAKKPAAKKAPAKKPAAKK).

This sequence belongs to the FKBP-type PPIase family. Tig subfamily.

The protein localises to the cytoplasm. It catalyses the reaction [protein]-peptidylproline (omega=180) = [protein]-peptidylproline (omega=0). Functionally, involved in protein export. Acts as a chaperone by maintaining the newly synthesized protein in an open conformation. Functions as a peptidyl-prolyl cis-trans isomerase. The polypeptide is Trigger factor (Erythrobacter litoralis (strain HTCC2594)).